A 1839-amino-acid polypeptide reads, in one-letter code: DNA-directed RNA polymerase II subunit RPB1 (1839 aa).

Residues cysteine 66, cysteine 69, cysteine 76, histidine 79, cysteine 106, cysteine 109, and cysteine 147 each coordinate Zn(2+). The interval 152–174 is disordered; sequence DIDDVQSHSTDEPVKKSRGGCGA. Positions 156-166 are enriched in basic and acidic residues; it reads VQSHSTDEPVK. Cysteine 172 is a binding site for Zn(2+). Residues 326–397 mediate DNA binding; sequence TQKSGRPIKS…PETVTPYNIE (72 aa). 3 residues coordinate Mg(2+): aspartate 495, aspartate 497, and aspartate 499. Residues 785 to 795 are alpha-amanitin binding; the sequence is GQQNVEGKRIP. The tract at residues 829-841 is bridging helix; that stretch reads PQEFFFHAMGGRE. Positions 1538 to 1726 are enriched in low complexity; the sequence is PSSSPGYSPS…PSYGPTSPSY (189 aa). A disordered region spans residues 1538-1839; it reads PSSSPGYSPS…DASKDDKGNP (302 aa). 27 consecutive repeat copies span residues 1544 to 1550, 1551 to 1557, 1558 to 1564, 1565 to 1571, 1572 to 1578, 1579 to 1585, 1586 to 1592, 1593 to 1599, 1600 to 1606, 1607 to 1613, 1614 to 1620, 1621 to 1627, 1628 to 1634, 1635 to 1641, 1642 to 1648, 1649 to 1655, 1656 to 1662, 1663 to 1669, 1670 to 1676, 1677 to 1683, 1684 to 1690, 1691 to 1697, 1698 to 1704, 1705 to 1711, 1712 to 1718, 1719 to 1725, and 1726 to 1732. Positions 1544-1813 are C-terminal domain (CTD); 37 X 7 AA tandem approximate repeats of Y-[GNS]-P-[QST]-[LNS]-[APT]-[AGKNRSTY]; sequence YSPSSPGYSP…LPGYSPSSTG (270 aa). Positions 1727 to 1745 are enriched in polar residues; that stretch reads NPQSAKYSPSIAYSPSNAR. Residues 1733–1738 form a 28; approximate repeat; it reads YSPSIA. 6 consecutive repeat copies span residues 1739 to 1745, 1752 to 1758, 1759 to 1765, 1766 to 1772, 1773 to 1779, and 1780 to 1786. A compositionally biased stretch (low complexity) spans 1747-1798; sequence SPASPYSPTSPNYSPTSPSYSPTSPSYSPSSPTYSPSSPYSSGASPDYSPSA. One copy of the 35; approximate repeat lies at 1794-1799; it reads YSPSAG. A run of 2 repeats spans residues 1800-1806 and 1807-1813. Residues 1818 to 1839 show a composition bias toward basic and acidic residues; it reads HEGDKKDKTGKKDASKDDKGNP.

The protein belongs to the RNA polymerase beta' chain family. Component of the RNA polymerase II (Pol II) complex consisting of at least 12 subunits. Interacts with RDM1. Interacts (via CTD) with PRP40A, PRP40B, PRP40C and CYP59. Interacts with MEE12/CCG1 and MEE14/CBP1. Binds (via CTD) to ATX1, especially when phosphorylated on 'Ser-5' of the heptapeptide repeat. The tandem 7 residues repeats in the C-terminal domain (CTD) can be highly phosphorylated. The phosphorylation activates Pol II. Phosphorylation occurs mainly at residues 'Ser-2' and 'Ser-5' of the heptapeptide repeat. The phosphorylation state is believed to result from the balanced action of site-specific CTD kinases and phosphatase, and a 'CTD code' that specifies the position of Pol II within the transcription cycle has been proposed. ATX1 seems to regulate phosphorylation statment. 'Ser-2' and 'Ser-5' phosphorylation are repressed by flavopiridol (Flap) and seliciclib (Selic), inhibitors of CDK7 and CDK9.

The protein resides in the nucleus. It carries out the reaction RNA(n) + a ribonucleoside 5'-triphosphate = RNA(n+1) + diphosphate. In terms of biological role, DNA-dependent RNA polymerase catalyzes the transcription of DNA into RNA using the four ribonucleoside triphosphates as substrates. Largest and catalytic component of RNA polymerase II which synthesizes mRNA precursors and many functional non-coding RNAs. Forms the polymerase active center together with the second largest subunit. Pol II is the central component of the basal RNA polymerase II transcription machinery. It is composed of mobile elements that move relative to each other. NRPB1 is part of the core element with the central large cleft, the clamp element that moves to open and close the cleft and the jaws that are thought to grab the incoming DNA template. At the start of transcription, a single-stranded DNA template strand of the promoter is positioned within the central active site cleft of Pol II. A bridging helix emanates from NRPB1 and crosses the cleft near the catalytic site and is thought to promote translocation of Pol II by acting as a ratchet that moves the RNA-DNA hybrid through the active site by switching from straight to bent conformations at each step of nucleotide addition. During transcription elongation, Pol II moves on the template as the transcript elongates. Elongation is influenced by the phosphorylation status of the C-terminal domain (CTD) of Pol II largest subunit (NRPB1), which serves as a platform for assembly of factors that regulate transcription initiation, elongation, termination and mRNA processing. In Arabidopsis thaliana (Mouse-ear cress), this protein is DNA-directed RNA polymerase II subunit RPB1.